The chain runs to 459 residues: MSNLPVEPEFEQAYKELASTLENSTLFEQHPEYRRALQVVSVPERVIQFRVVWENDKGEVQINRGYRVQFNSALGPYKGGLRFHPSVNLSILKFLGFEQIFKNALTGLNMGGGKGGSDFDPKGKSDSEIRRFCTAFMTELCKHIGADTDVPAGDIGVTGREVGFLFGQYRRIRNQWEGVLTGKGGSWGGSLIRPEATGYGVVYYVEHMIKHVTGGKESFAGKRVAISGSGNVAQYAALKVIELGGSVVSLSDSKGSLIVKDESASFTPEEIALIADLKVARKQLSELATSSAFAGKFTYIPDARPWTNIPGKFEVALPSATQNEVSGEEAEHLIKSGVRYIAEGSNMGCTQAAIDIFEAHRNANPGDAIWYAPGKAANAGGVAVSGLEMAQNSARLSWTSEEVDARLKGIMEDCFKNGLETAQKFATPAKGVLPSLVTGSNIAGFTKVAEAMKDQGDWW.

The active site involves Lys114.

Belongs to the Glu/Leu/Phe/Val dehydrogenases family. Homohexamer.

It catalyses the reaction L-glutamate + NADP(+) + H2O = 2-oxoglutarate + NH4(+) + NADPH + H(+). The polypeptide is NADP-specific glutamate dehydrogenase (gdhA) (Emericella nidulans (strain FGSC A4 / ATCC 38163 / CBS 112.46 / NRRL 194 / M139) (Aspergillus nidulans)).